Reading from the N-terminus, the 224-residue chain is Peroxiredoxin-6 (224 aa).

Positions 4-168 (LLLGDEAPNF…ILRVVDSLQL (165 aa)) constitute a Thioredoxin domain. The segment at 30–39 (DSWGILFSHP) is required and sufficient for targeting to lysosomes and lamellar bodies. Catalysis depends on cysteine 46, which acts as the Cysteine sulfenic acid (-SOH) intermediate; for peroxidase activity. Tyrosine 88 bears the Phosphotyrosine mark. Aspartate 139 (for phospholipase activity) is an active-site residue. Position 176 is a phosphothreonine; by MAPK (threonine 176).

The protein belongs to the peroxiredoxin family. Prx6 subfamily. Homodimer. Interacts with GSTP1; mediates PRDX6 glutathionylation and regeneration. In terms of processing, irreversibly inactivated by overoxidation of Cys-46 to sulfinic acid (Cys-SO(2)H) and sulfonic acid (Cys-SO(3)H) forms upon oxidative stress. Post-translationally, phosphorylation at Thr-176 by MAP kinases increases the phospholipase activity of the enzyme. The phosphorylated form exhibits a greater lysophosphatidylcholine acyltransferase activity compared to the non-phosphorylated form.

The protein resides in the cytoplasm. It localises to the lysosome. The enzyme catalyses a hydroperoxide + 2 glutathione = an alcohol + glutathione disulfide + H2O. It catalyses the reaction a 1,2-diacyl-sn-glycero-3-phosphocholine + H2O = a 1-acyl-sn-glycero-3-phosphocholine + a fatty acid + H(+). The catalysed reaction is a 1-acyl-sn-glycero-3-phosphocholine + an acyl-CoA = a 1,2-diacyl-sn-glycero-3-phosphocholine + CoA. It carries out the reaction 1-hexadecanoyl-sn-glycero-3-phosphocholine + hexadecanoyl-CoA = 1,2-dihexadecanoyl-sn-glycero-3-phosphocholine + CoA. The enzyme catalyses 1,2-dihexadecanoyl-sn-glycero-3-phosphocholine + H2O = 1-hexadecanoyl-sn-glycero-3-phosphocholine + hexadecanoate + H(+). In terms of biological role, thiol-specific peroxidase that catalyzes the reduction of hydrogen peroxide and organic hydroperoxides to water and alcohols, respectively. Can reduce H(2)O(2) and short chain organic, fatty acid, and phospholipid hydroperoxides. Also has phospholipase activity, and can therefore either reduce the oxidized sn-2 fatty acyl group of phospholipids (peroxidase activity) or hydrolyze the sn-2 ester bond of phospholipids (phospholipase activity). These activities are dependent on binding to phospholipids at acidic pH and to oxidized phospholipds at cytosolic pH. Plays a role in cell protection against oxidative stress by detoxifying peroxides and in phospholipid homeostasis. Exhibits acyl-CoA-dependent lysophospholipid acyltransferase which mediates the conversion of lysophosphatidylcholine (1-acyl-sn-glycero-3-phosphocholine or LPC) into phosphatidylcholine (1,2-diacyl-sn-glycero-3-phosphocholine or PC). Shows a clear preference for LPC as the lysophospholipid and for palmitoyl CoA as the fatty acyl substrate. The chain is Peroxiredoxin-6 (PRDX6) from Gallus gallus (Chicken).